The primary structure comprises 173 residues: Adenine phosphoribosyltransferase (173 aa).

The protein belongs to the purine/pyrimidine phosphoribosyltransferase family. As to quaternary structure, homodimer.

It is found in the cytoplasm. It catalyses the reaction AMP + diphosphate = 5-phospho-alpha-D-ribose 1-diphosphate + adenine. It participates in purine metabolism; AMP biosynthesis via salvage pathway; AMP from adenine: step 1/1. Functionally, catalyzes a salvage reaction resulting in the formation of AMP, that is energically less costly than de novo synthesis. This chain is Adenine phosphoribosyltransferase, found in Thermoanaerobacter sp. (strain X514).